A 299-amino-acid chain; its full sequence is Cathepsin B-like CP3 (299 aa).

The N-terminal stretch at 1 to 19 (MKLFLLAAAAFSAPALTVS) is a signal peptide. Cystine bridges form between C87-C114, C97-C140, and C133-C176. C100 is an active-site residue. Active-site residues include H244 and N265.

Belongs to the peptidase C1 family.

It is found in the vacuole. In terms of biological role, thiol protease which is required for parasite excystation and invasion of the proximal small intestine of the human host. The chain is Cathepsin B-like CP3 (CP3) from Giardia intestinalis (Giardia lamblia).